The primary structure comprises 675 residues: PTS system glucose-specific EIICBA component (675 aa).

The region spanning 3–414 (KKLFGQMQRI…FNYKTPGRED (412 aa)) is the PTS EIIC type-1 domain. 11 consecutive transmembrane segments (helical) span residues 16–36 (LMLP…GTAF), 59–79 (MLTG…ALGV), 81–101 (IGLA…FIIL), 126–146 (VLGI…GALA), 170–190 (FVPI…AIIW), 211–231 (LAVF…LHHI), 273–293 (FMQG…LAIY), 303–323 (VVAG…ITEP), 328–348 (FLFV…LSFL), 355–375 (VHLG…GILP), and 378–398 (TAWW…YFVF). Residues 425–506 (SQLPFDVLKA…AKIISGEITK (82 aa)) enclose the PTS EIIB type-1 domain. The active-site Phosphocysteine intermediate; for EIIB activity is the Cys447. Residues 547 to 651 (DKVFSEKMMG…SIITPVIITN (105 aa)) form the PTS EIIA type-1 domain. His599 (tele-phosphohistidine intermediate; for EIIA activity) is an active-site residue.

It localises to the cell membrane. It catalyses the reaction N(pros)-phospho-L-histidyl-[protein] + D-glucose(out) = D-glucose 6-phosphate(in) + L-histidyl-[protein]. Its function is as follows. The phosphoenolpyruvate-dependent sugar phosphotransferase system (sugar PTS), a major carbohydrate active transport system, catalyzes the phosphorylation of incoming sugar substrates concomitantly with their translocation across the cell membrane. This system is involved in glucose transport. The chain is PTS system glucose-specific EIICBA component (ptsG) from Staphylococcus epidermidis.